We begin with the raw amino-acid sequence, 480 residues long: Glutamate--tRNA ligase (480 aa).

Positions 21–31 (PSPTGYLHVGG) match the 'HIGH' region motif. Zn(2+) contacts are provided by Cys-110, Cys-112, Cys-137, and His-139. The 'KMSKS' region signature appears at 248 to 252 (KLSKR). Lys-251 is a binding site for ATP.

This sequence belongs to the class-I aminoacyl-tRNA synthetase family. Glutamate--tRNA ligase type 1 subfamily. In terms of assembly, monomer. The cofactor is Zn(2+).

Its subcellular location is the cytoplasm. The catalysed reaction is tRNA(Glu) + L-glutamate + ATP = L-glutamyl-tRNA(Glu) + AMP + diphosphate. In terms of biological role, catalyzes the attachment of glutamate to tRNA(Glu) in a two-step reaction: glutamate is first activated by ATP to form Glu-AMP and then transferred to the acceptor end of tRNA(Glu). This is Glutamate--tRNA ligase from Histophilus somni (strain 129Pt) (Haemophilus somnus).